The following is a 301-amino-acid chain: UDP-N-acetylenolpyruvoylglucosamine reductase (301 aa).

One can recognise an FAD-binding PCMH-type domain in the interval 26-193; sequence KTGGPAQYLA…VSATFGLEPG (168 aa). R172 is an active-site residue. The active-site Proton donor is the S222. The active site involves E292.

This sequence belongs to the MurB family. FAD is required as a cofactor.

It is found in the cytoplasm. The catalysed reaction is UDP-N-acetyl-alpha-D-muramate + NADP(+) = UDP-N-acetyl-3-O-(1-carboxyvinyl)-alpha-D-glucosamine + NADPH + H(+). It functions in the pathway cell wall biogenesis; peptidoglycan biosynthesis. In terms of biological role, cell wall formation. The polypeptide is UDP-N-acetylenolpyruvoylglucosamine reductase (Lactobacillus johnsonii (strain CNCM I-12250 / La1 / NCC 533)).